Consider the following 123-residue polypeptide: Alpha-lactalbumin A (123 aa).

The C-type lysozyme domain occupies 1 to 123; sequence KQFTKCELSQ…KLEQWLCEEL (123 aa). Disulfide bonds link C6–C120, C28–C111, C61–C77, and C73–C91. Residues K79, D82, D84, D87, and D88 each coordinate Ca(2+).

This sequence belongs to the glycosyl hydrolase 22 family. In terms of assembly, lactose synthase (LS) is a heterodimer of a catalytic component, beta1,4-galactosyltransferase (beta4Gal-T1) and a regulatory component, alpha-lactalbumin (LA). As to expression, mammary gland specific. Secreted in milk.

The protein localises to the secreted. Its function is as follows. Regulatory subunit of lactose synthase, changes the substrate specificity of galactosyltransferase in the mammary gland making glucose a good acceptor substrate for this enzyme. This enables LS to synthesize lactose, the major carbohydrate component of milk. In other tissues, galactosyltransferase transfers galactose onto the N-acetylglucosamine of the oligosaccharide chains in glycoproteins. The sequence is that of Alpha-lactalbumin A from Equus caballus (Horse).